The chain runs to 36 residues: Glucagon-2 (36 aa).

Belongs to the glucagon family.

The protein resides in the secreted. In terms of biological role, glucagon plays a key role in glucose metabolism and homeostasis. Regulates blood glucose by increasing gluconeogenesis and decreasing glycolysis. The sequence is that of Glucagon-2 from Huso dauricus (Kaluga sturgeon).